Consider the following 85-residue polypeptide: Protein BTH_I0359 (85 aa).

In Burkholderia thailandensis (strain ATCC 700388 / DSM 13276 / CCUG 48851 / CIP 106301 / E264), this protein is Protein BTH_I0359.